The chain runs to 253 residues: uncharacterized protein (253 aa).

Ser-145 provides a ligand contact to substrate. Residue Tyr-159 is the Proton acceptor of the active site.

It belongs to the short-chain dehydrogenases/reductases (SDR) family.

This is an uncharacterized protein from Mycobacterium tuberculosis (strain CDC 1551 / Oshkosh).